Reading from the N-terminus, the 204-residue chain is Thiamine-phosphate synthase (204 aa).

4-amino-2-methyl-5-(diphosphooxymethyl)pyrimidine-binding positions include 35 to 39 and Asn-67; that span reads QVREK. 2 residues coordinate Mg(2+): Asp-68 and Asp-87. A 4-amino-2-methyl-5-(diphosphooxymethyl)pyrimidine-binding site is contributed by Ser-106. 132–134 provides a ligand contact to 2-[(2R,5Z)-2-carboxy-4-methylthiazol-5(2H)-ylidene]ethyl phosphate; it reads TPT. 4-amino-2-methyl-5-(diphosphooxymethyl)pyrimidine is bound at residue Lys-135. Residues Gly-163 and 183–184 each bind 2-[(2R,5Z)-2-carboxy-4-methylthiazol-5(2H)-ylidene]ethyl phosphate; that span reads VS.

The protein belongs to the thiamine-phosphate synthase family. Mg(2+) is required as a cofactor.

It carries out the reaction 2-[(2R,5Z)-2-carboxy-4-methylthiazol-5(2H)-ylidene]ethyl phosphate + 4-amino-2-methyl-5-(diphosphooxymethyl)pyrimidine + 2 H(+) = thiamine phosphate + CO2 + diphosphate. The catalysed reaction is 2-(2-carboxy-4-methylthiazol-5-yl)ethyl phosphate + 4-amino-2-methyl-5-(diphosphooxymethyl)pyrimidine + 2 H(+) = thiamine phosphate + CO2 + diphosphate. The enzyme catalyses 4-methyl-5-(2-phosphooxyethyl)-thiazole + 4-amino-2-methyl-5-(diphosphooxymethyl)pyrimidine + H(+) = thiamine phosphate + diphosphate. It functions in the pathway cofactor biosynthesis; thiamine diphosphate biosynthesis; thiamine phosphate from 4-amino-2-methyl-5-diphosphomethylpyrimidine and 4-methyl-5-(2-phosphoethyl)-thiazole: step 1/1. Condenses 4-methyl-5-(beta-hydroxyethyl)thiazole monophosphate (THZ-P) and 2-methyl-4-amino-5-hydroxymethyl pyrimidine pyrophosphate (HMP-PP) to form thiamine monophosphate (TMP). The protein is Thiamine-phosphate synthase of Vibrio parahaemolyticus serotype O3:K6 (strain RIMD 2210633).